The following is a 172-amino-acid chain: Adenylate kinase isoenzyme 6 (172 aa).

Residues Gly13, Gly15, Lys16, Thr17, and Thr18 each contribute to the ATP site. Positions 33–56 (NVGDLAREGQLYDGYDEEYGCPIL) are NMPbind. The tract at residues 108 to 118 (TRGYNEKKLQD) is LID. Arg109 is an ATP binding site.

The protein belongs to the adenylate kinase family. AK6 subfamily. Monomer and homodimer. Interacts with small ribosomal subunit protein uS11. Not a structural component of 43S pre-ribosomes, but transiently interacts with them by binding to uS11. Interacts with COIL (via C-terminus).

Its subcellular location is the cytoplasm. The protein resides in the nucleus. The protein localises to the nucleoplasm. It is found in the cajal body. It carries out the reaction AMP + ATP = 2 ADP. The catalysed reaction is ATP + H2O = ADP + phosphate + H(+). Broad-specificity nucleoside monophosphate (NMP) kinase that catalyzes the reversible transfer of the terminal phosphate group between nucleoside triphosphates and monophosphates. Also has ATPase activity. Involved in the late cytoplasmic maturation steps of the 40S ribosomal particles, specifically 18S rRNA maturation. While NMP activity is not required for ribosome maturation, ATPase activity is. Associates transiently with small ribosomal subunit protein uS11. ATP hydrolysis breaks the interaction with uS11. May temporarily remove uS11 from the ribosome to enable a conformational change of the ribosomal RNA that is needed for the final maturation step of the small ribosomal subunit. Its NMP activity may have a role in nuclear energy homeostasis. May be involved in regulation of Cajal body (CB) formation. This is Adenylate kinase isoenzyme 6 from Mus musculus (Mouse).